A 470-amino-acid polypeptide reads, in one-letter code: Histone deacetylase HOS1 (470 aa).

A histone deacetylase region spans residues 47–392 (LTFPYARKDD…YTYLTWCVTK (346 aa)). At Ser-110 the chain carries Phosphoserine. His-211 is a catalytic residue.

It belongs to the histone deacetylase family. HD type 1 subfamily.

It localises to the nucleus. It carries out the reaction N(6)-acetyl-L-lysyl-[histone] + H2O = L-lysyl-[histone] + acetate. Functionally, responsible for the deacetylation of lysine residues on the N-terminal part of the core histones (H2A, H2B, H3 and H4). Histone deacetylation plays an important role in transcriptional regulation, cell cycle progression and developmental events. Histone deacetylases act via the formation of large multiprotein complexes. In Saccharomyces cerevisiae (strain ATCC 204508 / S288c) (Baker's yeast), this protein is Histone deacetylase HOS1 (HOS1).